We begin with the raw amino-acid sequence, 359 residues long: Protein FLX-like 2 (359 aa).

A compositionally biased stretch (basic residues) spans M1–R16. The tract at residues M1–H27 is disordered. The stretch at H83–N236 forms a coiled coil. The disordered stretch occupies residues T303–R359.

Belongs to the FLX family. Interacts with FRI.

Its function is as follows. Has no transcriptional activation activity. In Arabidopsis thaliana (Mouse-ear cress), this protein is Protein FLX-like 2 (FLXL2).